Consider the following 251-residue polypeptide: Type III pantothenate kinase (251 aa).

6 to 13 (DCGNSFIK) provides a ligand contact to ATP. Substrate-binding positions include tyrosine 93 and 100–103 (GLDR). Aspartate 102 functions as the Proton acceptor in the catalytic mechanism. Aspartate 122 contributes to the K(+) binding site. ATP is bound at residue threonine 125. Residue threonine 182 coordinates substrate.

Belongs to the type III pantothenate kinase family. In terms of assembly, homodimer. The cofactor is NH4(+). Requires K(+) as cofactor.

The protein localises to the cytoplasm. The enzyme catalyses (R)-pantothenate + ATP = (R)-4'-phosphopantothenate + ADP + H(+). It participates in cofactor biosynthesis; coenzyme A biosynthesis; CoA from (R)-pantothenate: step 1/5. In terms of biological role, catalyzes the phosphorylation of pantothenate (Pan), the first step in CoA biosynthesis. The polypeptide is Type III pantothenate kinase (Azotobacter vinelandii (strain DJ / ATCC BAA-1303)).